The following is a 335-amino-acid chain: tRNA N6-adenosine threonylcarbamoyltransferase (335 aa).

Positions 111 and 115 each coordinate Fe cation. Substrate is bound by residues 133-137 (LISGG), aspartate 166, glycine 179, and asparagine 276. Residue aspartate 301 participates in Fe cation binding.

This sequence belongs to the KAE1 / TsaD family. The cofactor is Fe(2+).

The protein localises to the cytoplasm. It catalyses the reaction L-threonylcarbamoyladenylate + adenosine(37) in tRNA = N(6)-L-threonylcarbamoyladenosine(37) in tRNA + AMP + H(+). In terms of biological role, required for the formation of a threonylcarbamoyl group on adenosine at position 37 (t(6)A37) in tRNAs that read codons beginning with adenine. Is involved in the transfer of the threonylcarbamoyl moiety of threonylcarbamoyl-AMP (TC-AMP) to the N6 group of A37, together with TsaE and TsaB. TsaD likely plays a direct catalytic role in this reaction. The polypeptide is tRNA N6-adenosine threonylcarbamoyltransferase (Wolbachia sp. subsp. Drosophila simulans (strain wRi)).